The sequence spans 356 residues: Alanine racemase, catabolic (356 aa).

Lys35 functions as the Proton acceptor; specific for D-alanine in the catalytic mechanism. Position 35 is an N6-(pyridoxal phosphate)lysine (Lys35). Arg130 is a substrate binding site. Tyr253 (proton acceptor; specific for L-alanine) is an active-site residue. Position 301 (Met301) interacts with substrate.

The protein belongs to the alanine racemase family. Pyridoxal 5'-phosphate serves as cofactor.

The catalysed reaction is L-alanine = D-alanine. Functionally, isomerizes L-alanine to D-alanine which is then oxidized to pyruvate by DadA. This chain is Alanine racemase, catabolic (dadX), found in Escherichia coli (strain K12).